Consider the following 200-residue polypeptide: Outer-membrane lipoprotein carrier protein (200 aa).

The first 18 residues, methionine 1–alanine 18, serve as a signal peptide directing secretion.

It belongs to the LolA family. Monomer.

The protein localises to the periplasm. Its function is as follows. Participates in the translocation of lipoproteins from the inner membrane to the outer membrane. Only forms a complex with a lipoprotein if the residue after the N-terminal Cys is not an aspartate (The Asp acts as a targeting signal to indicate that the lipoprotein should stay in the inner membrane). In Photobacterium profundum (strain SS9), this protein is Outer-membrane lipoprotein carrier protein.